We begin with the raw amino-acid sequence, 620 residues long: Translation initiation factor IF-2 (620 aa).

The 170-residue stretch at 126 to 295 (KRPPIVTIMG…IVTAEIMELK (170 aa)) folds into the tr-type G domain. The tract at residues 135-142 (GHVDHGKT) is G1. 135–142 (GHVDHGKT) provides a ligand contact to GTP. Residues 160-164 (NITQS) are G2. Residues 181-184 (DTPG) form a G3 region. GTP contacts are provided by residues 181–185 (DTPGH) and 235–238 (NKMD). The segment at 235–238 (NKMD) is G4. Residues 271–273 (SAL) are G5.

The protein belongs to the TRAFAC class translation factor GTPase superfamily. Classic translation factor GTPase family. IF-2 subfamily.

It localises to the cytoplasm. In terms of biological role, one of the essential components for the initiation of protein synthesis. Protects formylmethionyl-tRNA from spontaneous hydrolysis and promotes its binding to the 30S ribosomal subunits. Also involved in the hydrolysis of GTP during the formation of the 70S ribosomal complex. The polypeptide is Translation initiation factor IF-2 (Malacoplasma penetrans (strain HF-2) (Mycoplasma penetrans)).